The sequence spans 257 residues: 2,3,4,5-tetrahydropyridine-2,6-dicarboxylate N-acetyltransferase (257 aa).

It belongs to the transferase hexapeptide repeat family. DapH subfamily.

It catalyses the reaction (S)-2,3,4,5-tetrahydrodipicolinate + acetyl-CoA + H2O = L-2-acetamido-6-oxoheptanedioate + CoA. The protein operates within amino-acid biosynthesis; L-lysine biosynthesis via DAP pathway; LL-2,6-diaminopimelate from (S)-tetrahydrodipicolinate (acetylase route): step 1/3. In terms of biological role, catalyzes the transfer of an acetyl group from acetyl-CoA to tetrahydrodipicolinate. The polypeptide is 2,3,4,5-tetrahydropyridine-2,6-dicarboxylate N-acetyltransferase (Lactococcus lactis subsp. cremoris (strain SK11)).